Here is a 325-residue protein sequence, read N- to C-terminus: Elongation factor P--(R)-beta-lysine ligase (325 aa).

76–78 contributes to the substrate binding site; the sequence is SPE. ATP contacts are provided by residues 100-102 and Asn-109; that span reads RNE. Tyr-118 lines the substrate pocket. 244 to 245 is an ATP binding site; it reads EL. Substrate is bound at residue Glu-251. Gly-300 provides a ligand contact to ATP.

The protein belongs to the class-II aminoacyl-tRNA synthetase family. EpmA subfamily. In terms of assembly, homodimer.

The enzyme catalyses D-beta-lysine + L-lysyl-[protein] + ATP = N(6)-((3R)-3,6-diaminohexanoyl)-L-lysyl-[protein] + AMP + diphosphate + H(+). Functionally, with EpmB is involved in the beta-lysylation step of the post-translational modification of translation elongation factor P (EF-P). Catalyzes the ATP-dependent activation of (R)-beta-lysine produced by EpmB, forming a lysyl-adenylate, from which the beta-lysyl moiety is then transferred to the epsilon-amino group of a conserved specific lysine residue in EF-P. The sequence is that of Elongation factor P--(R)-beta-lysine ligase from Yersinia pseudotuberculosis serotype O:1b (strain IP 31758).